A 547-amino-acid chain; its full sequence is Probable protein kinase UbiB (547 aa).

The region spanning 121 to 501 (EFSPDPMASA…QLRSERRWRR (381 aa)) is the Protein kinase domain. Residues 127-135 (MASASVAQV) and K149 each bind ATP. Residue D284 is the Proton acceptor of the active site. Helical transmembrane passes span 502-522 (GFIA…HAGQ) and 523-543 (WLAD…GVML).

Belongs to the ABC1 family. UbiB subfamily.

Its subcellular location is the cell inner membrane. The protein operates within cofactor biosynthesis; ubiquinone biosynthesis [regulation]. In terms of biological role, is probably a protein kinase regulator of UbiI activity which is involved in aerobic coenzyme Q (ubiquinone) biosynthesis. The chain is Probable protein kinase UbiB from Marinobacter nauticus (strain ATCC 700491 / DSM 11845 / VT8) (Marinobacter aquaeolei).